Consider the following 377-residue polypeptide: Endoplasmic reticulum-Golgi intermediate compartment protein 2 (377 aa).

The Cytoplasmic portion of the chain corresponds to 1–33 (MRRLNRKKTLSLVKELDAFPKVPESYVETSASG). The helical transmembrane segment at 34-54 (GTVSLIAFTTMALLTIMEFSV) threads the bilayer. The Lumenal portion of the chain corresponds to 55–319 (YQDTWMKYEY…PFWQFFVRLC (265 aa)). A helical transmembrane segment spans residues 320-340 (GIVGGIFSTTGMLHGIGKFIV). Over 341-377 (EIICCRFRLGSYKPVNSVPFEDGHTDNHLPLLENNTH) the chain is Cytoplasmic.

This sequence belongs to the ERGIC family. May form a heteromeric complex composed of ERGIC1, ERGIC2 and ERGIC3. Interacts with ERGIC3, the interaction is required for the stable expression of both proteins. May interact with EEF1A1. As to expression, ubiquitously expressed.

The protein localises to the endoplasmic reticulum-Golgi intermediate compartment membrane. It localises to the golgi apparatus. The protein resides in the cis-Golgi network membrane. Its subcellular location is the endoplasmic reticulum membrane. It is found in the cytoplasm. The protein localises to the nucleus. Possible role in transport between endoplasmic reticulum and Golgi. In Homo sapiens (Human), this protein is Endoplasmic reticulum-Golgi intermediate compartment protein 2 (ERGIC2).